We begin with the raw amino-acid sequence, 216 residues long: Adenylate kinase (216 aa).

10–15 (GAGKGT) contributes to the ATP binding site. An NMP region spans residues 30–59 (STGDIFRAAIKNQTPMGVEAKKFIDKGELV). AMP is bound by residues Thr31, Arg36, 57 to 59 (ELV), 85 to 88 (GFPR), and Gln92. Positions 126-164 (GRFICRNCGTTYHRLYNPTKVEGTCDVCGGHDFYQRDDD) are LID. ATP is bound at residue Arg127. Zn(2+) contacts are provided by Cys130 and Cys133. 136 to 137 (TY) contributes to the ATP binding site. Residues Cys150 and Cys153 each coordinate Zn(2+). AMP contacts are provided by Arg161 and Arg172. Position 200 (Gln200) interacts with ATP.

The protein belongs to the adenylate kinase family. As to quaternary structure, monomer.

It is found in the cytoplasm. It carries out the reaction AMP + ATP = 2 ADP. The protein operates within purine metabolism; AMP biosynthesis via salvage pathway; AMP from ADP: step 1/1. Functionally, catalyzes the reversible transfer of the terminal phosphate group between ATP and AMP. Plays an important role in cellular energy homeostasis and in adenine nucleotide metabolism. The protein is Adenylate kinase of Limosilactobacillus fermentum (strain NBRC 3956 / LMG 18251) (Lactobacillus fermentum).